We begin with the raw amino-acid sequence, 497 residues long: tRNA (adenine(58)-N(1))-methyltransferase non-catalytic subunit TRM6 (497 aa).

2 disordered regions span residues 1-20 and 69-100; these read MEGS…DHRI and TSGG…IVDD. Over residues 79–100 the composition is skewed to basic and acidic residues; that stretch reads KREEPTAETKEAGTDNRNIVDD. 94-104 contacts substrate; that stretch reads NRNIVDDGKSQ. Phosphothreonine is present on threonine 107. Substrate-binding positions include 145-154 and 175-182; these read KYIKKKKKKY and REPGKINH. The tract at residues 276 to 354 is disordered; it reads SSEPKDSALV…EKQRRQEEQR (79 aa). A phosphoserine mark is found at serine 298 and serine 305. Over residues 327–354 the composition is skewed to basic and acidic residues; sequence DPEHKGPKERGSKKDYIQEKQRRQEEQR. Substrate is bound by residues arginine 349, arginine 377, 415 to 423, and 434 to 441; these read RERGGVINL and QVLPDRSH. Residues 472-497 are disordered; that stretch reads SNASTLESHETEEPAAKKRKCPESDS. The span at 478–497 shows a compositional bias: basic and acidic residues; it reads ESHETEEPAAKKRKCPESDS.

This sequence belongs to the TRM6/GCD10 family. As to quaternary structure, heterotetramer; composed of two copies of TRMT6 and two copies of TRMT61A. As to expression, expressed in brain, liver, testis and ovary.

It is found in the nucleus. In terms of biological role, substrate-binding subunit of tRNA (adenine-N(1)-)-methyltransferase, which catalyzes the formation of N(1)-methyladenine at position 58 (m1A58) in initiator methionyl-tRNA. Together with the TRMT61A catalytic subunit, part of a mRNA N(1)-methyltransferase complex that mediates methylation of adenosine residues at the N(1) position of a small subset of mRNAs: N(1) methylation takes place in tRNA T-loop-like structures of mRNAs and is only present at low stoichiometries. The chain is tRNA (adenine(58)-N(1))-methyltransferase non-catalytic subunit TRM6 (TRMT6) from Homo sapiens (Human).